The chain runs to 488 residues: E3 ubiquitin-protein ligase TRIM34 (488 aa).

The RING-type zinc-finger motif lies at 15-60 (CPICLELLTEPLSLDCGHSLCRACITVSNKEAVTSMGGKSSCPVCG). Residues 92 to 134 (KKRDLCDHHGEKLLLFCKEDRKVICWLCERSQEHRGHHTVLTE) form a B box-type zinc finger. 4 residues coordinate Zn(2+): Cys-97, His-100, Cys-119, and His-125. A coiled-coil region spans residues 131–239 (VLTEEVFKEC…VRELISDVEC (109 aa)). In terms of domain architecture, B30.2/SPRY spans 283–488 (LSRMLQMFRE…APMTLCPPSS (206 aa)).

The protein belongs to the TRIM/RBCC family. As to quaternary structure, homotrimer. Interacts (via B-box and SPRY domain) with TRIM5. In terms of assembly, (Microbial infection) Interacts (via the B30.2/SPRY domain) with HIV-1 capsid complexes. In terms of tissue distribution, is the most abundant form. It is highly expressed in the placenta, spleen, colon and peripheral blood leukocytes.

The protein localises to the cytoplasm. The protein resides in the mitochondrion. It catalyses the reaction S-ubiquitinyl-[E2 ubiquitin-conjugating enzyme]-L-cysteine + [acceptor protein]-L-lysine = [E2 ubiquitin-conjugating enzyme]-L-cysteine + N(6)-ubiquitinyl-[acceptor protein]-L-lysine.. It functions in the pathway protein modification; protein ubiquitination. Its function is as follows. Functions as antiviral protein and contributes to the defense against retroviral infections. Acts as a capsid-specific restriction factor with the help of TRIM5 and prevents infection from non-host-adapted retroviruses. During influenza A virus infection, promotes programmed cell death by targeting ZBP1 for 'Lys-63'-linked polyubiquitination. In turn, promotes ZBP1 recruitment of RIPK3 to mediate virus-induced programmed necrosis. Negatively regulates the function of mitochondria by enhancing mitochondrial depolarization leading to cytochrome c release and mitochondria-dependent apoptosis. Also promotes the formation of multinucleated giant cells by means of cell fusion and phagocytosis in epithelial cells. The protein is E3 ubiquitin-protein ligase TRIM34 (TRIM34) of Homo sapiens (Human).